The chain runs to 500 residues: NAD(P)H-quinone oxidoreductase chain 4, chloroplastic (500 aa).

15 helical membrane-spanning segments follow: residues 4–24 (FYWLTIIVVLPISAGSLIALL), 35–55 (YTICICLFELLLTTYVFCYHF), 80–100 (LGIDGLSIGPILLTGFITTLA), 113–130 (LFHFLMLAMYSGQIGSFS), 134–154 (LLLFFIMWELELIPVYLLLSM), 167–187 (FILYTAGGSIFLLMGVLGMGL), 208–228 (ALEIIFYFGFLIAYAVKSPII), 242–262 (HYSTCMLLAGILLKMGAYGLV), 274–294 (SIFSPWLMIVGTIQIIYAALT), 305–325 (IAYSSVSHMGFIIIGISSITD), 330–350 (GAILQIISHGFIGAALFFLAG), 364–384 (MGGIAILMPRIFTMFSSFSMA), 386–406 (LALPGMSGFVAEFVIFLGIIT), 416–436 (ILITFVMAIGMILTPIYSLSM), and 462–482 (IFIFMCILLPIIGIGIYPDFV).

The protein belongs to the complex I subunit 4 family.

It localises to the plastid. It is found in the chloroplast thylakoid membrane. The catalysed reaction is a plastoquinone + NADH + (n+1) H(+)(in) = a plastoquinol + NAD(+) + n H(+)(out). The enzyme catalyses a plastoquinone + NADPH + (n+1) H(+)(in) = a plastoquinol + NADP(+) + n H(+)(out). The protein is NAD(P)H-quinone oxidoreductase chain 4, chloroplastic of Nymphaea alba (White water-lily).